Here is a 1362-residue protein sequence, read N- to C-terminus: Integrator complex subunit 2 homolog (1362 aa).

Over residues 1 to 10 the composition is skewed to low complexity; the sequence is MITSNNNNKN. Disordered regions lie at residues 1 to 20, 629 to 660, and 928 to 963; these read MITS…EMKS, TTGT…SSPN, and NNNK…EEEE. The span at 945-955 shows a compositional bias: basic and acidic residues; that stretch reads DDVKMKDKEKE.

Belongs to the Integrator subunit 2 family. As to quaternary structure, component of the Integrator complex. The core complex associates with protein phosphatase 2A subunits, to form the Integrator-PP2A (INTAC) complex.

The protein resides in the nucleus. Its subcellular location is the cytoplasm. Component of the integrator complex, a multiprotein complex that terminates RNA polymerase II (Pol II) transcription in the promoter-proximal region of genes. The integrator complex provides a quality checkpoint during transcription elongation by driving premature transcription termination of transcripts that are unfavorably configured for transcriptional elongation: the complex terminates transcription by (1) catalyzing dephosphorylation of the C-terminal domain (CTD) of Pol II subunit polr2a, (2) degrading the exiting nascent RNA transcript via endonuclease activity and (3) promoting the release of Pol II from bound DNA. The integrator complex is also involved in terminating the synthesis of non-coding Pol II transcripts, such as enhancer RNAs (eRNAs), small nuclear RNAs (snRNAs), telomerase RNAs and long non-coding RNAs (lncRNAs). In Dictyostelium discoideum (Social amoeba), this protein is Integrator complex subunit 2 homolog (ints2).